Consider the following 130-residue polypeptide: Small ribosomal subunit protein uS9 (130 aa).

This sequence belongs to the universal ribosomal protein uS9 family.

The polypeptide is Small ribosomal subunit protein uS9 (Burkholderia ambifaria (strain MC40-6)).